We begin with the raw amino-acid sequence, 98 residues long: NADH-ubiquinone oxidoreductase chain 4L (98 aa).

Helical transmembrane passes span 1-21 (MPLI…GMLV), 29-49 (SLLC…LMTL), and 58-78 (IVPI…LALL).

Belongs to the complex I subunit 4L family. Core subunit of respiratory chain NADH dehydrogenase (Complex I) which is composed of 45 different subunits.

The protein localises to the mitochondrion inner membrane. The catalysed reaction is a ubiquinone + NADH + 5 H(+)(in) = a ubiquinol + NAD(+) + 4 H(+)(out). Core subunit of the mitochondrial membrane respiratory chain NADH dehydrogenase (Complex I) which catalyzes electron transfer from NADH through the respiratory chain, using ubiquinone as an electron acceptor. Part of the enzyme membrane arm which is embedded in the lipid bilayer and involved in proton translocation. This is NADH-ubiquinone oxidoreductase chain 4L (MT-ND4L) from Pan paniscus (Pygmy chimpanzee).